Reading from the N-terminus, the 727-residue chain is Elongation factor 2 (727 aa).

Positions 19-260 (DQIRNMGICA…MAIKHLPNPL (242 aa)) constitute a tr-type G domain. GTP contacts are provided by residues 28–35 (AHIDHGKT), 94–98 (DTPGH), and 148–151 (NKVD). The residue at position 603 (H603) is a Diphthamide.

It belongs to the TRAFAC class translation factor GTPase superfamily. Classic translation factor GTPase family. EF-G/EF-2 subfamily.

It localises to the cytoplasm. Functionally, catalyzes the GTP-dependent ribosomal translocation step during translation elongation. During this step, the ribosome changes from the pre-translocational (PRE) to the post-translocational (POST) state as the newly formed A-site-bound peptidyl-tRNA and P-site-bound deacylated tRNA move to the P and E sites, respectively. Catalyzes the coordinated movement of the two tRNA molecules, the mRNA and conformational changes in the ribosome. This is Elongation factor 2 from Methanococcus maripaludis (strain C7 / ATCC BAA-1331).